A 575-amino-acid chain; its full sequence is Preprotein translocase subunit SCY2, chloroplastic (575 aa).

The N-terminal 34 residues, 1-34, are a transit peptide targeting the chloroplast; sequence MNSSQACFFHFSLRPISLSHPSYAFLSKRDPFLC. A run of 10 helical transmembrane segments spans residues 157-177, 206-226, 251-271, 285-305, 306-326, 346-366, 414-434, 447-467, 509-529, and 531-551; these read FVTA…LPGF, LSLF…MQVL, IWWL…YTSL, VMMT…LCDT, ISES…ILTG, LPYL…AVVV, TTYL…PFLL, GAPP…FNIF, FWGG…DHYL, and SINQ…GSII.

Belongs to the SecY/SEC61-alpha family. Part of a second Sec protein translocation apparatus. Interacts probably with SECA2. As to expression, ubiquitous.

It localises to the plastid. The protein resides in the chloroplast membrane. Its subcellular location is the amyloplast membrane. It is found in the chloroplast thylakoid membrane. Functionally, involved in protein export. Probably interacts with other proteins to allow the postimport or conservative sorting pathway for inner membrane proteins in plastids. Central subunit of the protein translocation channel SecYE. Consists of two halves formed by TMs 1-5 and 6-10. These two domains form a lateral gate at the front which open onto the bilayer between TMs 2 and 7, and are clamped together by SecE at the back. The channel is closed by both a pore ring composed of hydrophobic SecY resides and a short helix (helix 2A) on the extracellular side of the membrane which forms a plug. This chain is Preprotein translocase subunit SCY2, chloroplastic (SCY2), found in Arabidopsis thaliana (Mouse-ear cress).